Consider the following 324-residue polypeptide: UDP-N-acetylenolpyruvoylglucosamine reductase (324 aa).

The FAD-binding PCMH-type domain maps to 36-203 (FRAGGLAELM…TSVLFEGYPE (168 aa)). Arg183 is a catalytic residue. The Proton donor role is filled by Ser232. Residue Glu302 is part of the active site.

The protein belongs to the MurB family. It depends on FAD as a cofactor.

It is found in the cytoplasm. The catalysed reaction is UDP-N-acetyl-alpha-D-muramate + NADP(+) = UDP-N-acetyl-3-O-(1-carboxyvinyl)-alpha-D-glucosamine + NADPH + H(+). It functions in the pathway cell wall biogenesis; peptidoglycan biosynthesis. Cell wall formation. This is UDP-N-acetylenolpyruvoylglucosamine reductase from Rhizobium etli (strain CIAT 652).